Consider the following 452-residue polypeptide: General transcription and DNA repair factor IIH subunit TFB2 (452 aa).

It belongs to the TFB2 family. As to quaternary structure, component of the 7-subunit TFIIH core complex composed of XPB, XPD, TFB1/GTF2H1, GTF2H2/P44, TFB4/GTF2H3, TFB2/GTF2H4 and TFB5/GTF2H5, which is active in NER. The core complex associates with the 3-subunit CDK-activating kinase (CAK) module composed of CYCH1/cyclin H1, CDKD and MAT1/At4g30820 to form the 10-subunit holoenzyme (holo-TFIIH) active in transcription.

It is found in the nucleus. Component of the general transcription and DNA repair factor IIH (TFIIH) core complex, which is involved in general and transcription-coupled nucleotide excision repair (NER) of damaged DNA and, when complexed to CAK, in RNA transcription by RNA polymerase II. In NER, TFIIH acts by opening DNA around the lesion to allow the excision of the damaged oligonucleotide and its replacement by a new DNA fragment. In transcription, TFIIH has an essential role in transcription initiation. When the pre-initiation complex (PIC) has been established, TFIIH is required for promoter opening and promoter escape. Phosphorylation of the C-terminal tail (CTD) of the largest subunit of RNA polymerase II by the kinase module CAK controls the initiation of transcription. In Arabidopsis thaliana (Mouse-ear cress), this protein is General transcription and DNA repair factor IIH subunit TFB2.